Here is a 130-residue protein sequence, read N- to C-terminus: Protein ApaG (130 aa).

The ApaG domain occupies 3-127 (KAETRGISVT…FSLDVPHVRR (125 aa)).

The chain is Protein ApaG from Methylobacterium sp. (strain 4-46).